Reading from the N-terminus, the 1353-residue chain is ABC-type transporter MYCGRDRAFT_41235 (1353 aa).

A helical membrane pass occupies residues 40–60 (ASASLWNWFFFSWLNPLIAIG). A glycan (N-linked (GlcNAc...) asparagine) is linked at asparagine 121. Helical transmembrane passes span 124 to 144 (VLVW…ATIT), 172 to 192 (IGQG…GVMA), 250 to 270 (FACG…ICLG), 271 to 291 (LTIA…AILV), 364 to 384 (VALS…TYAA), and 397 to 417 (ALTL…AFGA). The ABC transmembrane type-1 1 domain occupies 129–420 (WVGGAMKLFA…LPVAFGAAAD (292 aa)). Positions 460–684 (YRVQDHSDEK…EGGQMRRVVE (225 aa)) constitute an ABC transporter 1 domain. N-linked (GlcNAc...) asparagine glycosylation is present at asparagine 481. 496-503 (GPVGAGKS) serves as a coordination point for ATP. Positions 687 to 720 (ASKSSAEEEEVEDGDLKDGVPSTDGGDASQTTSN) are disordered. 6 helical membrane-spanning segments follow: residues 748-768 (PAFT…GSIL), 796-816 (LGVS…FFIF), 864-882 (AFRM…VVLI), 888-907 (WFLL…GMYY), 973-993 (LSVR…LIVV), and 1002-1022 (AQGG…GFMI). The region spanning 756-1030 (ILSMLIFQGG…MIRQSAEIEN (275 aa)) is the ABC transmembrane type-1 2 domain. In terms of domain architecture, ABC transporter 2 spans 1070–1334 (IEMRDVVFTH…EGGHFRSLCS (265 aa)). 1104 to 1111 (GRTGSGKS) serves as a coordination point for ATP. The span at 1191 to 1200 (QSSAETLTSS) shows a compositional bias: polar residues. Residues 1191–1223 (QSSAETLTSSDQEKSSPDDAAISPSSHSHSQHL) are disordered. A compositionally biased stretch (low complexity) spans 1208–1218 (DDAAISPSSHS).

This sequence belongs to the ABC transporter superfamily. ABCC family. Conjugate transporter (TC 3.A.1.208) subfamily.

Its subcellular location is the cell membrane. Its function is as follows. Multidrug resistance protein; part of the gene cluster 14 that mediates the biosynthesis of a ferrichrome A-like siderophors which may contribute to organismal virulence. The chain is ABC-type transporter MYCGRDRAFT_41235 from Zymoseptoria tritici (strain CBS 115943 / IPO323) (Speckled leaf blotch fungus).